We begin with the raw amino-acid sequence, 503 residues long: Probable cytosol aminopeptidase (503 aa).

2 residues coordinate Mn(2+): lysine 268 and aspartate 273. Lysine 280 is a catalytic residue. The Mn(2+) site is built by aspartate 291, aspartate 350, and glutamate 352. The active site involves arginine 354.

This sequence belongs to the peptidase M17 family. The cofactor is Mn(2+).

The protein localises to the cytoplasm. It catalyses the reaction Release of an N-terminal amino acid, Xaa-|-Yaa-, in which Xaa is preferably Leu, but may be other amino acids including Pro although not Arg or Lys, and Yaa may be Pro. Amino acid amides and methyl esters are also readily hydrolyzed, but rates on arylamides are exceedingly low.. It carries out the reaction Release of an N-terminal amino acid, preferentially leucine, but not glutamic or aspartic acids.. Its function is as follows. Presumably involved in the processing and regular turnover of intracellular proteins. Catalyzes the removal of unsubstituted N-terminal amino acids from various peptides. The sequence is that of Probable cytosol aminopeptidase from Nocardia farcinica (strain IFM 10152).